The chain runs to 500 residues: Na(+)/H(+) antiporter NhaB (500 aa).

11 helical membrane passes run 23-43 (VVIC…GPVA), 53-73 (IFTL…LLLI), 96-116 (VILL…LLLF), 129-149 (AILA…LDAL), 150-170 (TVTA…HRVA), 205-225 (LLMH…VGEP), 238-258 (FVDF…AGLV), 311-331 (ILII…LMVI), 350-370 (FQDA…VAVI), 450-470 (ATPN…APLI), and 477-497 (MVWM…WAVT).

The protein belongs to the NhaB Na(+)/H(+) (TC 2.A.34) antiporter family.

The protein resides in the cell inner membrane. It catalyses the reaction 2 Na(+)(in) + 3 H(+)(out) = 2 Na(+)(out) + 3 H(+)(in). Na(+)/H(+) antiporter that extrudes sodium in exchange for external protons. The sequence is that of Na(+)/H(+) antiporter NhaB from Pseudomonas putida (strain ATCC 47054 / DSM 6125 / CFBP 8728 / NCIMB 11950 / KT2440).